Here is a 523-residue protein sequence, read N- to C-terminus: NAD(P)H-quinone oxidoreductase subunit 2 (523 aa).

The next 13 membrane-spanning stretches (helical) occupy residues 30–50 (VGPE…DLAG), 57–77 (WVPP…ALQW), 94–114 (LAIA…LISW), 128–148 (AAIL…TDLV), 182–202 (LLVG…LYGL), 223–243 (AALA…AVPF), 255–275 (PTPV…ALAL), 291–311 (LLFT…ALAQ), 317–337 (MLAY…VCGT), 345–365 (VLYM…IILF), 389–409 (LGLS…GFFG), 424–444 (VLVV…IGVI), and 477–497 (VALV…NPLF).

This sequence belongs to the complex I subunit 2 family. In terms of assembly, NDH-1 can be composed of about 15 different subunits; different subcomplexes with different compositions have been identified which probably have different functions.

Its subcellular location is the cellular thylakoid membrane. The catalysed reaction is a plastoquinone + NADH + (n+1) H(+)(in) = a plastoquinol + NAD(+) + n H(+)(out). It catalyses the reaction a plastoquinone + NADPH + (n+1) H(+)(in) = a plastoquinol + NADP(+) + n H(+)(out). NDH-1 shuttles electrons from an unknown electron donor, via FMN and iron-sulfur (Fe-S) centers, to quinones in the respiratory and/or the photosynthetic chain. The immediate electron acceptor for the enzyme in this species is believed to be plastoquinone. Couples the redox reaction to proton translocation, and thus conserves the redox energy in a proton gradient. Cyanobacterial NDH-1 also plays a role in inorganic carbon-concentration. In Synechococcus sp. (strain CC9311), this protein is NAD(P)H-quinone oxidoreductase subunit 2.